A 696-amino-acid chain; its full sequence is Interleukin-1 receptor accessory protein-like 1 (696 aa).

The N-terminal stretch at 1–18 is a signal peptide; sequence MKAPIPHLILLYATFTQS. The region spanning 19 to 134 is the Ig-like C2-type 1 domain; the sequence is LKVVTKRGSA…YCMKVSISLT (116 aa). At 19-357 the chain is on the extracellular side; that stretch reads LKVVTKRGSA…LLHKRELMYT (339 aa). 2 cysteine pairs are disulfide-bonded: Cys31–Cys126 and Cys53–Cys118. Residues Asn63, Asn122, and Asn138 are each glycosylated (N-linked (GlcNAc...) asparagine). 2 disulfides stabilise this stretch: Cys143–Cys185 and Cys164–Cys216. 2 consecutive Ig-like C2-type domains span residues 143–232 and 242–350; these read CYNS…TELT and PKLL…VLLH. Residues Asn213, Asn264, and Asn331 are each glycosylated (N-linked (GlcNAc...) asparagine). Cys267 and Cys334 are oxidised to a cystine. The chain crosses the membrane as a helical span at residues 358–378; the sequence is VELAGGLGAILLLLVCLVTIY. The Cytoplasmic portion of the chain corresponds to 379–696; that stretch reads KCYKIEIMLF…RETSISSVIW (318 aa). The region spanning 403–559 is the TIR domain; it reads KDYDAYLSYT…KFWKRLQYEM (157 aa). The active site involves Glu491. Residues 549–644 are interaction with NCS1; it reads SKFWKRLQYE…TGTLPLTSIG (96 aa). The interval 659–680 is disordered; it reads GQRPQTKSSREQNPDEAHTNSA. Basic and acidic residues predominate over residues 666-676; that stretch reads SSREQNPDEAH.

This sequence belongs to the interleukin-1 receptor family. As to quaternary structure, homodimer. Interacts (calcium-independent) with NCS1. Interacts (via the first immunoglobilin domain) with PTPRD (via the second immunoglobilin domain); this interaction is PTPRD-splicing-dependent and induces pre- and post-synaptic differentiation of neurons and is required for IL1RAPL1-mediated synapse formation. Detected at low levels in heart, skeletal muscle, ovary, skin, amygdala, caudate nucleus, corpus callosum, hippocampus, substantia nigra and thalamus. Detected at very low levels in tonsil, prostate, testis, small intestine, placenta, colon and fetal liver.

It is found in the cell membrane. Its subcellular location is the cytoplasm. It localises to the cell projection. The protein resides in the axon. The protein localises to the dendrite. The catalysed reaction is NAD(+) + H2O = ADP-D-ribose + nicotinamide + H(+). May regulate secretion and presynaptic differentiation through inhibition of the activity of N-type voltage-gated calcium channel. May activate the MAP kinase JNK. Plays a role in neurite outgrowth. During dendritic spine formation can bidirectionally induce pre- and post-synaptic differentiation of neurons by trans-synaptically binding to PTPRD. The polypeptide is Interleukin-1 receptor accessory protein-like 1 (IL1RAPL1) (Homo sapiens (Human)).